Consider the following 346-residue polypeptide: MIESDRIITASPFSSQEEVIERALRPVQLDDYVGQEKIREQLKIFIEAARQRQEALDHVLLFGPPGLGKTTLAHIIAREMGVNLRHTSGPVLERAGDLAALLTNLEANDVLFIDEIHRLSPVVEEILYPAMEDYQLDIMIGEGVAARSVKIDLPSFTLVGATTRAGMLTNPLRDRFGIVSRLEFYTSDELSKIVTRSAGLLDVDITADGAREIACRSRGTPRIANRLLRRVRDFAEVRANGRIDRQVADAALQMLDVDAAGLDVLDRKLLLAVLEKFGGGPVGVDNLAAAINEERDTIEEVLEPYLIQQGFLQRTPRGRMATTMTYQHFDIIPLQQAATPGLFNPD.

The large ATPase domain (RuvB-L) stretch occupies residues 4–185 (SDRIITASPF…FGIVSRLEFY (182 aa)). ATP is bound by residues L24, R25, G66, K69, T70, T71, 132-134 (EDY), R175, Y185, and R222. Residue T70 participates in Mg(2+) binding. The tract at residues 186 to 256 (TSDELSKIVT…VADAALQMLD (71 aa)) is small ATPAse domain (RuvB-S). The interval 259-346 (AAGLDVLDRK…AATPGLFNPD (88 aa)) is head domain (RuvB-H). Residues R295, R314, and R319 each contribute to the DNA site.

It belongs to the RuvB family. Homohexamer. Forms an RuvA(8)-RuvB(12)-Holliday junction (HJ) complex. HJ DNA is sandwiched between 2 RuvA tetramers; dsDNA enters through RuvA and exits via RuvB. An RuvB hexamer assembles on each DNA strand where it exits the tetramer. Each RuvB hexamer is contacted by two RuvA subunits (via domain III) on 2 adjacent RuvB subunits; this complex drives branch migration. In the full resolvosome a probable DNA-RuvA(4)-RuvB(12)-RuvC(2) complex forms which resolves the HJ.

It is found in the cytoplasm. The enzyme catalyses ATP + H2O = ADP + phosphate + H(+). The RuvA-RuvB-RuvC complex processes Holliday junction (HJ) DNA during genetic recombination and DNA repair, while the RuvA-RuvB complex plays an important role in the rescue of blocked DNA replication forks via replication fork reversal (RFR). RuvA specifically binds to HJ cruciform DNA, conferring on it an open structure. The RuvB hexamer acts as an ATP-dependent pump, pulling dsDNA into and through the RuvAB complex. RuvB forms 2 homohexamers on either side of HJ DNA bound by 1 or 2 RuvA tetramers; 4 subunits per hexamer contact DNA at a time. Coordinated motions by a converter formed by DNA-disengaged RuvB subunits stimulates ATP hydrolysis and nucleotide exchange. Immobilization of the converter enables RuvB to convert the ATP-contained energy into a lever motion, pulling 2 nucleotides of DNA out of the RuvA tetramer per ATP hydrolyzed, thus driving DNA branch migration. The RuvB motors rotate together with the DNA substrate, which together with the progressing nucleotide cycle form the mechanistic basis for DNA recombination by continuous HJ branch migration. Branch migration allows RuvC to scan DNA until it finds its consensus sequence, where it cleaves and resolves cruciform DNA. This chain is Holliday junction branch migration complex subunit RuvB, found in Nitrosomonas eutropha (strain DSM 101675 / C91 / Nm57).